We begin with the raw amino-acid sequence, 159 residues long: Phosphopantetheine adenylyltransferase (159 aa).

Histidine 16 lines the ATP pocket. Substrate contacts are provided by lysine 40, methionine 72, and arginine 86. ATP is bound by residues 87–89 (GLR), glutamate 97, and 122–128 (YQYLSAS).

It belongs to the bacterial CoaD family. As to quaternary structure, homohexamer. Mg(2+) serves as cofactor.

The protein localises to the cytoplasm. The enzyme catalyses (R)-4'-phosphopantetheine + ATP + H(+) = 3'-dephospho-CoA + diphosphate. The protein operates within cofactor biosynthesis; coenzyme A biosynthesis; CoA from (R)-pantothenate: step 4/5. Reversibly transfers an adenylyl group from ATP to 4'-phosphopantetheine, yielding dephospho-CoA (dPCoA) and pyrophosphate. In Dehalococcoides mccartyi (strain ATCC BAA-2266 / KCTC 15142 / 195) (Dehalococcoides ethenogenes (strain 195)), this protein is Phosphopantetheine adenylyltransferase.